The chain runs to 246 residues: Virulence plasmid protein pGP6-D (246 aa).

Belongs to the UPF0137 (pGP6-D) family.

In Chlamydia muridarum (strain MoPn / Nigg), this protein is Virulence plasmid protein pGP6-D.